Reading from the N-terminus, the 180-residue chain is Small ribosomal subunit protein uS4 (180 aa).

Residues R103–H165 form the S4 RNA-binding domain.

It belongs to the universal ribosomal protein uS4 family. In terms of assembly, part of the 30S ribosomal subunit. Contacts protein S5. The interaction surface between S4 and S5 is involved in control of translational fidelity.

In terms of biological role, one of the primary rRNA binding proteins, it binds directly to 16S rRNA where it nucleates assembly of the body of the 30S subunit. Its function is as follows. With S5 and S12 plays an important role in translational accuracy. This Thermococcus gammatolerans (strain DSM 15229 / JCM 11827 / EJ3) protein is Small ribosomal subunit protein uS4.